Consider the following 422-residue polypeptide: Histidine--tRNA ligase (422 aa).

It belongs to the class-II aminoacyl-tRNA synthetase family. As to quaternary structure, homodimer.

It is found in the cytoplasm. The enzyme catalyses tRNA(His) + L-histidine + ATP = L-histidyl-tRNA(His) + AMP + diphosphate + H(+). The sequence is that of Histidine--tRNA ligase from Onion yellows phytoplasma (strain OY-M).